Consider the following 121-residue polypeptide: RING-box protein HRT1 (121 aa).

Positions 1–31 (MSNEVDRMDVDEDESQNIAQSSNQSAPVETK) are disordered. Residue serine 15 is modified to Phosphoserine. The span at 16–26 (QNIAQSSNQSA) shows a compositional bias: low complexity. Residues cysteine 55, cysteine 58, cysteine 66, cysteine 69, cysteine 81, cysteine 88, histidine 90, histidine 93, histidine 95, cysteine 107, and aspartate 110 each coordinate Zn(2+). The RING-type zinc-finger motif lies at 55–111 (CAICRNHIMEPCIECQPKAMTDTDNECVAAWGVCNHAFHLHCINKWIKTRDACPLDN).

The protein belongs to the RING-box family. As to quaternary structure, component of multiple cullin-RING ligases (CRLs) composed of 4 subunits: the RING protein HRT1, a cullin, a linker protein, and one of many alternative substrate receptors. Component of SCF E3 ubiquitin ligase complexes containing the cullin CDC53, the linker protein SKP1/CBF3D, and substrate receptors containing F-box motifs like DAS1 or GRR1. Component of RTT101(MMS1) E3 ubiquitin ligase complexes containing the cullin RTT101, the linker protein MMS1, and substrate receptors belonging to a protein family described as DCAF (DDB1- and CUL4-associated factor) like MMS22. Component of CRL3 E3 ubiquitin ligase complexes containing the cullin CUL3, the linker protein ELC1, and substrate receptors containing SOCS-box motifs like ELA1. Interacts with CDC53, CUL3, RTT101, CDC4 and CDC34/UBC3.

The protein resides in the cytoplasm. Its subcellular location is the nucleus. The protein operates within protein modification; protein ubiquitination. Functionally, core component of multiple cullin-RING-based E3 ubiquitin-protein ligase complexes (CRLs), which mediate the ubiquitination of target proteins. Recruits the E2 ubiquitin-conjugating enzyme CDC34/UBC3 to the complex and brings it into close proximity to the substrate. Also stimulates CDC34/UBC3 autoubiquitination and promotes the neddylation of CDC53 and RTT101. Component of the SCF(CDC4) ubiquitin ligase required for ubiquitination of the cyclin-dependent kinase inhibitor SIC1 and for the G1-to-S phase transition. Component of the RTT101(MMS1-MMS22) ubiquitin ligase that promotes fork progression through damaged DNA or natural pause sites. Component of the CRL3(ELA1) ubiquitin ligase required for ubiquitination of RPB1, the largest subunit of RNA polymerase II (Pol II), which targets Pol II for proteasomal degradation in DNA-damaged cells. This is RING-box protein HRT1 (HRT1) from Saccharomyces cerevisiae (strain ATCC 204508 / S288c) (Baker's yeast).